A 1997-amino-acid polypeptide reads, in one-letter code: Receptor-type tyrosine-protein phosphatase beta (1997 aa).

The signal sequence occupies residues 1–22 (MLSHGAGLALWITLSLLQTGLA). Fibronectin type-III domains are found at residues 23 to 111 (EPER…TDPL), 112 to 207 (PPAR…SPVK), 203 to 288 (PSPV…VRTA), 291 to 378 (EVSN…TFPD), 379 to 471 (KVAN…LAVL), 467 to 552 (PLAV…KGRT), 556 to 641 (QVTD…EGRT), 642 to 729 (VPSS…QERT), 730 to 829 (VPDK…TLRN), 819 to 906 (PEPV…GFTV), 909 to 1001 (AVKN…VQGV), 995 to 1083 (PASV…EGRT), 1087 to 1175 (AVTD…VPAS), 1173 to 1260 (PASV…SRTA), 1260 to 1356 (APSP…TKPD), 1357 to 1448 (KIQN…IDRP), and 1458 to 1554 (NEKD…EMES). Residues 23 to 1621 (EPERCNFTLA…ESEPLFGAIE (1599 aa)) lie on the Extracellular side of the membrane. Asparagine 28, asparagine 53, asparagine 75, asparagine 172, asparagine 198, asparagine 267, asparagine 321, asparagine 414, asparagine 421, asparagine 479, asparagine 544, asparagine 574, asparagine 598, asparagine 652, asparagine 721, and asparagine 829 each carry an N-linked (GlcNAc...) asparagine glycan. Residues asparagine 1040, asparagine 1096, asparagine 1163, asparagine 1185, asparagine 1212, asparagine 1274, asparagine 1367, asparagine 1470, asparagine 1474, and asparagine 1518 are each glycosylated (N-linked (GlcNAc...) asparagine). The helical transmembrane segment at 1622 to 1642 (GVSAGLFLIGMLVAVVALLIC) threads the bilayer. The Cytoplasmic segment spans residues 1643–1997 (RQKVSHGRER…YHRDPVYSRH (355 aa)). The region spanning 1703 to 1963 (LSKEYEELKD…VYLHQCVRDV (261 aa)) is the Tyrosine-protein phosphatase domain. Substrate-binding positions include aspartate 1870, 1904–1910 (CSAGVGR), and glutamine 1948. The active-site Phosphocysteine intermediate is cysteine 1904. Tyrosine 1981 is modified (phosphotyrosine).

This sequence belongs to the protein-tyrosine phosphatase family. Receptor class 3 subfamily. In terms of assembly, monomer. Interacts with TEK. Interacts via fibronectin type-III 17 domain with CDH5. Detected in a complex with CNTN1 and NRCAM. Interacts (phosphorylated form) with FYN and GRB2. Interacts with IGFBP2.

The protein resides in the membrane. The catalysed reaction is O-phospho-L-tyrosyl-[protein] + H2O = L-tyrosyl-[protein] + phosphate. Plays an important role in blood vessel remodeling and angiogenesis. Not necessary for the initial formation of blood vessels, but is essential for their maintenance and remodeling. Can induce dephosphorylation of TEK/TIE2, CDH5/VE-cadherin and KDR/VEGFR-2. Regulates angiopoietin-TIE2 signaling in endothelial cells. Acts as a negative regulator of TIE2, and controls TIE2 driven endothelial cell proliferation, which in turn affects blood vessel remodeling during embryonic development and determines blood vessel size during perinatal growth. Essential for the maintenance of endothelial cell contact integrity and for the adhesive function of VE-cadherin in endothelial cells and this requires the presence of plakoglobin. The protein is Receptor-type tyrosine-protein phosphatase beta (PTPRB) of Homo sapiens (Human).